The sequence spans 329 residues: Ribosomal RNA small subunit methyltransferase C (329 aa).

This sequence belongs to the methyltransferase superfamily. RsmC family. In terms of assembly, monomer.

The protein resides in the cytoplasm. It catalyses the reaction guanosine(1207) in 16S rRNA + S-adenosyl-L-methionine = N(2)-methylguanosine(1207) in 16S rRNA + S-adenosyl-L-homocysteine + H(+). Specifically methylates the guanine in position 1207 of 16S rRNA in the 30S particle. This Actinobacillus pleuropneumoniae serotype 5b (strain L20) protein is Ribosomal RNA small subunit methyltransferase C.